Consider the following 311-residue polypeptide: Meteorin-like protein (311 aa).

The signal sequence occupies residues 1-45 (MRGVVWAARRRAGQQWPRSPGPGPGPPPPPPLLLLLLLLLGGASA). Cys-52 and Cys-75 are joined by a disulfide. A glycan (N-linked (GlcNAc...) asparagine) is linked at Asn-103. Cystine bridges form between Cys-107/Cys-143, Cys-188/Cys-260, Cys-191/Cys-284, and Cys-201/Cys-306.

The protein belongs to the meteorin family. Abundantly expressed in adipose tissue.

It localises to the secreted. Functionally, hormone induced following exercise or cold exposure that promotes energy expenditure. Induced either in the skeletal muscle after exercise or in adipose tissue following cold exposure and is present in the circulation. Able to stimulate energy expenditure associated with the browning of the white fat depots and improves glucose tolerance. Does not promote an increase in a thermogenic gene program via direct action on adipocytes, but acts by stimulating several immune cell subtypes to enter the adipose tissue and activate their prothermogenic actions. Stimulates an eosinophil-dependent increase in IL4 expression and promotes alternative activation of adipose tissue macrophages, which are required for the increased expression of the thermogenic and anti-inflammatory gene programs in fat. Required for some cold-induced thermogenic responses, suggesting a role in metabolic adaptations to cold temperatures. This Rattus norvegicus (Rat) protein is Meteorin-like protein (Metrnl).